We begin with the raw amino-acid sequence, 119 residues long: Basic phospholipase A2 acanthin-1 (119 aa).

7 disulfides stabilise this stretch: C11-C71, C27-C118, C29-C45, C44-C99, C51-C92, C60-C85, and C78-C90. Ca(2+) is bound by residues Y28, G30, and G32. Residue H48 is part of the active site. D49 provides a ligand contact to Ca(2+). D93 is a catalytic residue.

Ca(2+) is required as a cofactor. As to expression, expressed by the venom gland.

The protein localises to the secreted. It catalyses the reaction a 1,2-diacyl-sn-glycero-3-phosphocholine + H2O = a 1-acyl-sn-glycero-3-phosphocholine + a fatty acid + H(+). Snake venom phospholipase A2 (PLA2) that potently inhibits ADP-(IC(50)=10 nM) and collagen-induced (IC(50)=7 nM) platelet aggregation when tested on human whole blood. PLA2 catalyzes the calcium-dependent hydrolysis of the 2-acyl groups in 3-sn-phosphoglycerides. The polypeptide is Basic phospholipase A2 acanthin-1 (Acanthophis antarcticus (Common death adder)).